Consider the following 430-residue polypeptide: Adenylosuccinate synthetase (430 aa).

GTP is bound by residues G12–K18 and G40–T42. D13 functions as the Proton acceptor in the catalytic mechanism. Positions 13 and 40 each coordinate Mg(2+). IMP is bound by residues D13 to K16, N38 to H41, T130, R144, Q224, T239, and R303. The Proton donor role is filled by H41. A substrate-binding site is contributed by T299 to R305. GTP is bound by residues R305, K331–D333, and S413–S415.

It belongs to the adenylosuccinate synthetase family. In terms of assembly, homodimer. The cofactor is Mg(2+).

The protein localises to the cytoplasm. The catalysed reaction is IMP + L-aspartate + GTP = N(6)-(1,2-dicarboxyethyl)-AMP + GDP + phosphate + 2 H(+). It participates in purine metabolism; AMP biosynthesis via de novo pathway; AMP from IMP: step 1/2. In terms of biological role, plays an important role in the de novo pathway of purine nucleotide biosynthesis. Catalyzes the first committed step in the biosynthesis of AMP from IMP. The chain is Adenylosuccinate synthetase from Rhodopseudomonas palustris (strain BisB5).